The following is a 373-amino-acid chain: Cathecol O-methyltransferase 1 (373 aa).

Residues Gly209, Asp232, Asp252, Met253, Met265, and Lys266 each coordinate S-adenosyl-L-homocysteine. Asp232 is a binding site for S-adenosyl-L-methionine. The active-site Proton acceptor is the His279.

Belongs to the class I-like SAM-binding methyltransferase superfamily. Cation-independent O-methyltransferase family. COMT subfamily.

The enzyme catalyses catechol + S-adenosyl-L-methionine = guaiacol + S-adenosyl-L-homocysteine + H(+). Functionally, O-methyltransferase that catalyzes the conversion of catechol to guaiacol. Involved in the production of guaiacol in fruits. This Solanum lycopersicum (Tomato) protein is Cathecol O-methyltransferase 1.